The following is a 407-amino-acid chain: Accessory Sec system protein translocase subunit SecY2 (407 aa).

10 helical membrane passes run 13–33 (FLWT…TLPF), 65–85 (FFSI…MFTV), 104–124 (MLLT…NLPL), 133–153 (GTIV…LIWL), 158–178 (SSMG…SYIP), 192–212 (PLIL…AVLV), 248–268 (IMYA…LLFF), 287–307 (IPWF…FAFI), 345–365 (FAFV…LLIF), and 370–390 (YMRL…VFSI).

Belongs to the SecY/SEC61-alpha family. SecY2 subfamily. May form heterotrimers with SecE and SecG subunits (Potential). Component of the accessory SecA2/SecY2 protein translocase complex required to export cell wall protein GspB.

It localises to the cell membrane. In terms of biological role, the central subunit of a protein translocation channel (Potential). Part of the accessory SecA2/SecY2 system specifically required to export GspB, a serine-rich repeat cell wall protein encoded upstream in the same operon. This is Accessory Sec system protein translocase subunit SecY2 from Streptococcus gordonii.